The sequence spans 2169 residues: Vitellogenin-A1 (2169 aa).

An N-terminal signal peptide occupies residues 1–46 (MATDGITSRFGFNERRRTHNRNSCRILEDKMLAKLLLLALAGLTAA). Asn107 and Asn125 each carry an N-linked (GlcNAc...) asparagine glycan. Residues 116 to 1008 (WMPNYEYVYN…SNDHRYPSGL (893 aa)) enclose the Vitellogenin domain. Tyr159 and Tyr163 each carry sulfotyrosine. Residues Asn360, Asn391, and Asn435 are each glycosylated (N-linked (GlcNAc...) asparagine). Disordered regions lie at residues 426–481 (DKKN…DKVE) and 514–570 (NDTS…SSSE). A compositionally biased stretch (low complexity) spans 438–461 (SSSSSSSSSSSSSSSESSSSSSES). Asn514 carries an N-linked (GlcNAc...) asparagine glycan. Positions 517–531 (SSDSSSSDSSSSSSS) are enriched in low complexity. Asn538 carries N-linked (GlcNAc...) asparagine glycosylation. Residues 541–570 (SSYSSSSSSSSSSSSSESSSYSSSSSSSSE) show a composition bias toward low complexity. 3 N-linked (GlcNAc...) asparagine glycosylation sites follow: Asn587, Asn763, and Asn781. Residues Tyr1067, Tyr1070, and Tyr1074 each carry the sulfotyrosine modification. N-linked (GlcNAc...) asparagine glycans are attached at residues Asn1140, Asn1233, and Asn1336. Tyr1563, Tyr1564, and Tyr1570 each carry sulfotyrosine. N-linked (GlcNAc...) asparagine glycosylation is found at Asn1652 and Asn1696. A sulfotyrosine mark is found at Tyr1737, Tyr1806, Tyr1809, Tyr1822, Tyr1824, and Tyr1888. The 210-residue stretch at 1770-1979 (PSCSFSNDYF…SYAITGQNCT (210 aa)) folds into the VWFD domain. 2 cysteine pairs are disulfide-bonded: Cys1772/Cys1942 and Cys1794/Cys1978. N-linked (GlcNAc...) asparagine glycosylation is present at Asn1977. Over residues 2026-2063 (EESSSSSSSSSSDSSSSSSSSESSSRSRSGSSSSSSSS) the composition is skewed to low complexity. The interval 2026 to 2081 (EESSSSSSSSSSDSSSSSSSSESSSRSRSGSSSSSSSSEEQKEFHPHKQEHSMKEC) is disordered. Positions 2064–2079 (EEQKEFHPHKQEHSMK) are enriched in basic and acidic residues.

Post-translationally, glycosylated, phosphorylated and sulfated. The large subunit is sulfated more extensively than the small one. As to expression, produced by the fat body, where it is cleaved in the rough endoplasmic reticulum or cis-Golgi before being secreted into hemolymph. It is then sequestered by a single class of receptor mediated endocytosis in the ovary.

In terms of biological role, precursor of the egg-yolk proteins that are sources of nutrients during embryonic development. May supply aromatic amino acids to the cuticle of rapidly developing embryos. This Aedes aegypti (Yellowfever mosquito) protein is Vitellogenin-A1 (VGA1).